The following is a 776-amino-acid chain: MSVLEQLGALDIGTNEQVDETLQRIADEEAKVNEKLESLLAKQCQIEAKMSGIGRSLSLLHTVDSDSNKLNDQIVNTAQLAESVSAKVRRLDLARCRASECQQRVHDLIDLHLCSQGVVKAIGEEDYEKSATHIARFLAMDQQLLRRTADDVQGSITSVSDAVKTLEDATEKTRVLIAKRFDEAVKADDLASVERFFKIFPLVGCHRTGIEKFSLYICQKLANKAQKELRNAQDIAKAESRLQLAYADRLTAILENFARVVEVNQPIIEAFYGQASSSLIDMVSILQHECDTEVKNLLMEFNKNRQIQYRSKQVNESTQRSAGGGNLGSNSIQALGHYRKPSGGSVDKLNPKEIDAIIAEITVMHARVELYFRFMRRRLQVHVETCVPEKEQFDIMERYEKIMKNSDLRRQMQEILSTYLLLERYFMEESVLKAIGLDTYESGQQCSSMVDDVFFILRKSIRRALTTQSINGTCAVINNVAACLDGDFVNALKAPLKSGYPSGYIDLAQAYNAIQTSLQQGKLHSSDADRGRANFLVQLNNADISTEYIETLCQTMEQEIAGTFPQTTQVERQMLDSCLTELKAVRDALKATVDFGMQQLRSSVIKPRLNPWINQFLNYSHNLNEEELAAYEAGETFVQFFIVQLDGLLNSFKNSLSPRNYDALVSILATEVTIQLERAIKKISFNRLGGLVLDQEVRALGSYLTGATSWSVRDKMTRISQIATLLNLDKITELSEYWNPENNKEMSSWHLTPNEVRTFLTLRNDFRIEDIKRLQL.

Phosphoserine occurs at positions 342 and 345.

The protein belongs to the COG4 family. In terms of assembly, component of the conserved oligomeric Golgi complex which is composed of eight different subunits and is required for normal Golgi morphology and localization.

It is found in the golgi apparatus membrane. In terms of biological role, required for normal Golgi function. In Drosophila melanogaster (Fruit fly), this protein is Conserved oligomeric Golgi complex subunit 4.